The following is a 60-amino-acid chain: Large ribosomal subunit protein uL30 (60 aa).

It belongs to the universal ribosomal protein uL30 family. As to quaternary structure, part of the 50S ribosomal subunit.

The polypeptide is Large ribosomal subunit protein uL30 (Acidovorax ebreus (strain TPSY) (Diaphorobacter sp. (strain TPSY))).